The sequence spans 120 residues: Ribosome-binding factor A (120 aa).

This sequence belongs to the RbfA family. As to quaternary structure, monomer. Binds 30S ribosomal subunits, but not 50S ribosomal subunits or 70S ribosomes.

The protein resides in the cytoplasm. Its function is as follows. One of several proteins that assist in the late maturation steps of the functional core of the 30S ribosomal subunit. Associates with free 30S ribosomal subunits (but not with 30S subunits that are part of 70S ribosomes or polysomes). Required for efficient processing of 16S rRNA. May interact with the 5'-terminal helix region of 16S rRNA. The sequence is that of Ribosome-binding factor A from Dictyoglomus thermophilum (strain ATCC 35947 / DSM 3960 / H-6-12).